The chain runs to 153 residues: uncharacterized protein (153 aa).

Residues 1–21 form the signal peptide; the sequence is MKITITSLLFFLVMIVELASA.

This is an uncharacterized protein from Saccharomyces cerevisiae (strain ATCC 204508 / S288c) (Baker's yeast).